The following is a 111-amino-acid chain: Class I hydrophobin SC4 (111 aa).

The N-terminal stretch at 1 to 25 (MRFSLALLALPALAAAAPVPGGGKG) is a signal peptide. 4 disulfide bridges follow: Cys-30-Cys-37, Cys-38-Cys-72, Cys-86-Cys-92, and Cys-93-Cys-106. N-linked (GlcNAc...) asparagine glycosylation occurs at Asn-39.

This sequence belongs to the fungal hydrophobin family. As to quaternary structure, self-assembles to form functional amyloid fibrils called rodlets. Self-assembly into fibrillar rodlets occurs spontaneously at hydrophobic:hydrophilic interfaces and the rodlets further associate laterally to form amphipathic monolayers.

It is found in the secreted. The protein resides in the cell wall. Its function is as follows. Aerial growth, conidiation, and dispersal of filamentous fungi in the environment rely upon a capability of their secreting small amphipathic proteins called hydrophobins (HPBs) with low sequence identity. Class I can self-assemble into an outermost layer of rodlet bundles on aerial cell surfaces, conferring cellular hydrophobicity that supports fungal growth, development and dispersal; whereas Class II form highly ordered films at water-air interfaces through intermolecular interactions but contribute nothing to the rodlet structure. SC4 is a dikaryon-specific class I hydrophobin that contributes to the formation of aerial hyphae and fruiting bodies. Plays a role within fruiting bodies by preventing gas channels filling with water under wet conditions, probably serving uninterrupted gas exchange. SC4 cannot fully substitute for SC3. Involved in the unusual characteristic of mounds to adhere to and completely envelop adjacent fruiting bodies on mosaic colonies. The sequence is that of Class I hydrophobin SC4 from Schizophyllum commune (Split gill fungus).